The chain runs to 2067 residues: Negative regulator of mitosis (2067 aa).

A compositionally biased stretch (polar residues) spans 100 to 118 (SLAIPQTTSQQSNRPSGSE). 3 disordered regions span residues 100 to 132 (SLAIPQTTSQQSNRPSGSESLDGKESRRSSTSK), 332 to 408 (ESIP…DDFA), and 452 to 480 (GSQSSTIHPGGLRQSIGAGSTRGSFGFNP). The Nuclear localization signal motif lies at 336 to 347 (SHRKKKRRDTGG). Over residues 336–355 (SHRKKKRRDTGGTRSKRRSS) the composition is skewed to basic residues. The span at 384-396 (WNASVMSHSQYST) shows a compositional bias: polar residues. PC repeat units follow at residues 1434–1465 (AGIMGIGLLYCNSQHRRMSEVMLSEIENADQE), 1482–1520 (AAGFALGFINLGKGKDLKGMRDMHIVERLLAVAVGTKNV), 1532–1562 (GATIALAIIFMKTNDETLAQKVDIPDTTVRF), and 1625–1659 (GLCFALGLRFAGSPDPTVRDILLSYLDQFIRISRL). A disordered region spans residues 2020–2042 (FPSESDEEKRDRQETGSMPSSGH).

Belongs to the APC1 family.

In terms of biological role, negative regulator of mitosis in E.nidulans. This protein is part of a regulatory pathway that includes the nimA protein kinase. It is required to prevent premature entry into mitosis. Mutations to this protein both cause cells to enter mitosis and prevent them from leaving mitosis. The protein is Negative regulator of mitosis (bimE) of Emericella nidulans (strain FGSC A4 / ATCC 38163 / CBS 112.46 / NRRL 194 / M139) (Aspergillus nidulans).